A 296-amino-acid polypeptide reads, in one-letter code: Ribonuclease HIII (296 aa).

Residues Leu-80–Lys-296 form the RNase H type-2 domain. A divalent metal cation-binding residues include Asp-86, Glu-87, and Asp-191.

The protein belongs to the RNase HII family. RnhC subfamily. Mn(2+) serves as cofactor. It depends on Mg(2+) as a cofactor.

It localises to the cytoplasm. It catalyses the reaction Endonucleolytic cleavage to 5'-phosphomonoester.. Functionally, endonuclease that specifically degrades the RNA of RNA-DNA hybrids. The protein is Ribonuclease HIII of Streptococcus thermophilus (strain CNRZ 1066).